Reading from the N-terminus, the 273-residue chain is Acetyl-coenzyme A carboxylase carboxyl transferase subunit alpha (273 aa).

One can recognise a CoA carboxyltransferase C-terminal domain in the interval 1-244 (MKKATQSKAW…KVVLKQALDE (244 aa)).

Belongs to the AccA family. As to quaternary structure, acetyl-CoA carboxylase is a heterohexamer composed of biotin carboxyl carrier protein (AccB), biotin carboxylase (AccC) and two subunits each of ACCase subunit alpha (AccA) and ACCase subunit beta (AccD).

The protein localises to the cytoplasm. The enzyme catalyses N(6)-carboxybiotinyl-L-lysyl-[protein] + acetyl-CoA = N(6)-biotinyl-L-lysyl-[protein] + malonyl-CoA. The protein operates within lipid metabolism; malonyl-CoA biosynthesis; malonyl-CoA from acetyl-CoA: step 1/1. Component of the acetyl coenzyme A carboxylase (ACC) complex. First, biotin carboxylase catalyzes the carboxylation of biotin on its carrier protein (BCCP) and then the CO(2) group is transferred by the carboxyltransferase to acetyl-CoA to form malonyl-CoA. The polypeptide is Acetyl-coenzyme A carboxylase carboxyl transferase subunit alpha (Acinetobacter baumannii (strain AB0057)).